The chain runs to 125 residues: Small ribosomal subunit protein uS12 (125 aa).

The residue at position 89 (Asp89) is a 3-methylthioaspartic acid.

The protein belongs to the universal ribosomal protein uS12 family. Part of the 30S ribosomal subunit. Contacts proteins S8 and S17. May interact with IF1 in the 30S initiation complex.

Functionally, with S4 and S5 plays an important role in translational accuracy. Its function is as follows. Interacts with and stabilizes bases of the 16S rRNA that are involved in tRNA selection in the A site and with the mRNA backbone. Located at the interface of the 30S and 50S subunits, it traverses the body of the 30S subunit contacting proteins on the other side and probably holding the rRNA structure together. The combined cluster of proteins S8, S12 and S17 appears to hold together the shoulder and platform of the 30S subunit. The sequence is that of Small ribosomal subunit protein uS12 from Clostridium acetobutylicum (strain ATCC 824 / DSM 792 / JCM 1419 / IAM 19013 / LMG 5710 / NBRC 13948 / NRRL B-527 / VKM B-1787 / 2291 / W).